The sequence spans 228 residues: 7-cyano-7-deazaguanine synthase (228 aa).

9-19 lines the ATP pocket; the sequence is LSGGPDSTTVL. Residues C193, C203, C206, and C209 each coordinate Zn(2+).

The protein belongs to the QueC family. Zn(2+) is required as a cofactor.

It catalyses the reaction 7-carboxy-7-deazaguanine + NH4(+) + ATP = 7-cyano-7-deazaguanine + ADP + phosphate + H2O + H(+). It participates in purine metabolism; 7-cyano-7-deazaguanine biosynthesis. Functionally, catalyzes the ATP-dependent conversion of 7-carboxy-7-deazaguanine (CDG) to 7-cyano-7-deazaguanine (preQ(0)). The polypeptide is 7-cyano-7-deazaguanine synthase (Rickettsia conorii (strain ATCC VR-613 / Malish 7)).